The chain runs to 180 residues: Colicin-E5 (180 aa).

2 disordered regions span residues 24-143 and 155-180; these read AQTD…GSPG and VTQI…KNDQ. Positions 54-76 are enriched in basic and acidic residues; it reads ESRKKKEDNKRDAEGKLNDELAK. Residues 74–180 are nuclease; it reads LAKNKGKIPG…RIQWGNKNDQ (107 aa). Positions 106 to 116 are enriched in polar residues; that stretch reads NTVSNGATGTS. A compositionally biased stretch (basic and acidic residues) spans 160–171; that stretch reads DKTDPGWVDDSR.

It belongs to the colicin/pyosin nuclease family.

Functionally, colicins are polypeptide toxins produced by and active against E.coli and closely related bacteria. This colicin is an endonuclease. This Escherichia coli protein is Colicin-E5 (col).